The sequence spans 112 residues: ATP synthase epsilon chain (112 aa).

This sequence belongs to the ATPase epsilon chain family. As to quaternary structure, F-type ATPases have 2 components, CF(1) - the catalytic core - and CF(0) - the membrane proton channel. CF(1) has five subunits: alpha(3), beta(3), gamma(1), delta(1), epsilon(1). CF(0) has three main subunits: a, b and c.

The protein localises to the cell inner membrane. In terms of biological role, produces ATP from ADP in the presence of a proton gradient across the membrane. This is ATP synthase epsilon chain (atpC) from Rickettsia prowazekii (strain Madrid E).